Here is a 364-residue protein sequence, read N- to C-terminus: Methylthioribose-1-phosphate isomerase (364 aa).

Residues 53 to 55, Arg90, and Gln203 contribute to the substrate site; that span reads RGA. The Proton donor role is filled by Asp244. 254–255 is a binding site for substrate; that stretch reads NK.

It belongs to the eIF-2B alpha/beta/delta subunits family. MtnA subfamily.

The enzyme catalyses 5-(methylsulfanyl)-alpha-D-ribose 1-phosphate = 5-(methylsulfanyl)-D-ribulose 1-phosphate. It functions in the pathway amino-acid biosynthesis; L-methionine biosynthesis via salvage pathway; L-methionine from S-methyl-5-thio-alpha-D-ribose 1-phosphate: step 1/6. Its function is as follows. Catalyzes the interconversion of methylthioribose-1-phosphate (MTR-1-P) into methylthioribulose-1-phosphate (MTRu-1-P). The polypeptide is Methylthioribose-1-phosphate isomerase (Brucella anthropi (strain ATCC 49188 / DSM 6882 / CCUG 24695 / JCM 21032 / LMG 3331 / NBRC 15819 / NCTC 12168 / Alc 37) (Ochrobactrum anthropi)).